The following is a 338-amino-acid chain: 1-aminocyclopropane-1-carboxylate deaminase (338 aa).

Lysine 51 is modified (N6-(pyridoxal phosphate)lysine). Catalysis depends on serine 78, which acts as the Nucleophile.

This sequence belongs to the ACC deaminase/D-cysteine desulfhydrase family. Homotrimer. The cofactor is pyridoxal 5'-phosphate.

It catalyses the reaction 1-aminocyclopropane-1-carboxylate + H2O = 2-oxobutanoate + NH4(+). Its function is as follows. Catalyzes a cyclopropane ring-opening reaction, the irreversible conversion of 1-aminocyclopropane-1-carboxylate (ACC) to ammonia and alpha-ketobutyrate. Allows growth on ACC as a nitrogen source. The polypeptide is 1-aminocyclopropane-1-carboxylate deaminase (Burkholderia orbicola (strain MC0-3)).